A 479-amino-acid chain; its full sequence is Beta-amyrin 28-monooxygenase (479 aa).

The chain crosses the membrane as a helical span at residues 5 to 25 (FYLSLLLLFVTFISLSLFFIF). Residue C426 coordinates heme.

The protein belongs to the cytochrome P450 family. It depends on heme as a cofactor. Expressed in roots, nodules and flowers.

It localises to the membrane. It catalyses the reaction beta-amyrin + 3 reduced [NADPH--hemoprotein reductase] + 3 O2 = oleanolate + 3 oxidized [NADPH--hemoprotein reductase] + 4 H2O + 4 H(+). Functionally, catalyzes the carboxylation of beta-amyrin at the C-28 position to form oleanolic acid. Involved in an early step in the hemolytic saponin biosynthetic pathway. Catalyzes the carboxylation of alpha-amyrin and lupeol at the C-28 position to form ursolic acid and betulinic acid respectively. The polypeptide is Beta-amyrin 28-monooxygenase (Medicago truncatula (Barrel medic)).